A 531-amino-acid chain; its full sequence is Probable protein phosphatase 2C 66 (531 aa).

The interval 1–47 is disordered; sequence MGSCLSSDLPPRAGAGAGASPGWPQRWRRRRQRGVERGGAVSGGGGG. Low complexity predominate over residues 10–25; sequence PPRAGAGAGASPGWPQ. A PPM-type phosphatase domain is found at 88 to 401; it reads AACLHTQQGR…DDCAVVCLFL (314 aa). Mn(2+) contacts are provided by Asp123 and Gly124. The segment covering 151–172 has biased composition (polar residues); sequence SANEDTSSHQNGSISGSVNSEE. Residues 151-176 form a disordered region; it reads SANEDTSSHQNGSISGSVNSEESPVV. Mn(2+) is bound by residues Asp346 and Asp392.

Belongs to the PP2C family. Mg(2+) is required as a cofactor. Mn(2+) serves as cofactor.

The enzyme catalyses O-phospho-L-seryl-[protein] + H2O = L-seryl-[protein] + phosphate. The catalysed reaction is O-phospho-L-threonyl-[protein] + H2O = L-threonyl-[protein] + phosphate. This Oryza sativa subsp. japonica (Rice) protein is Probable protein phosphatase 2C 66.